Reading from the N-terminus, the 928-residue chain is RhoGEF domain-containing protein gxcH (928 aa).

A compositionally biased stretch (low complexity) spans 30 to 48 (SKSFDNNNNNNSNTNNIKN). 3 disordered regions span residues 30–76 (SKSF…PPVP), 90–201 (ITNY…PPLG), and 318–410 (DNGV…NKDT). A compositionally biased stretch (polar residues) spans 93–103 (YIPTTPPSINI). Acidic residues predominate over residues 112 to 123 (DNYDDNYDDNYS). Composition is skewed to polar residues over residues 129–141 (TSTT…SPEF), 175–187 (ETFN…EGLQ), and 334–367 (KSGT…NLRG). A compositionally biased stretch (low complexity) spans 377-407 (NQTTNKNNSNNNNNNTTTNNNNNNNNNNNNN). The region spanning 484–671 (IFNKVVKEII…GKIVSDINGK (188 aa)) is the DH domain. Positions 699–807 (FIGEGKVKKV…NKIEDQIVSE (109 aa)) are PH-like. Positions 835 to 928 (SDSQSDFVDH…NTEPENFSFY (94 aa)) are disordered. Positions 848-857 (QEQQEQQQQQ) are enriched in low complexity.

Functionally, GTPase-activating protein. This chain is RhoGEF domain-containing protein gxcH (gxcH), found in Dictyostelium discoideum (Social amoeba).